Reading from the N-terminus, the 394-residue chain is Probable glycosyltransferase FCK3 (394 aa).

This sequence belongs to the afumC glycosyltransferase family.

It functions in the pathway secondary metabolite biosynthesis. Probable glycosyl transferase; part of the gene cluster that mediates the biosynthesis of cytokinins such as fusatin, fusatinic acids or 8-oxofusatin, known for their growth promoting and anti-senescence activities toward host plants. FCK1 is a bifunctional enzyme that performs the first steps in the biosynthesis of Fusarium cytokinins. It first condenses adenosine monophosphate (AMP) with dimethylallyl diphosphate (DMAPP) to yield isoprenyl adenosine monophosphate. It then catalyzes the removal of the phosphoribose to produce isopentenylaldehyde. The cytochrome P450 monooxygenase then converts isopentenylaldehyde to trans-zeatin. A condensation step converts trans-zeatin to fusatin which is further modified to produce fusatinic acid. The mechanism for oxidation of fusatin to fusatinic acid remains unknown. 8-oxofusatin could be produced through several pathways, via direct oxygenation of fusatin, or via the 8-oxo-pentenyladenine intermediate which itself must arise from either the prenylation of 8-oxo-AMP by FCK1 and/or oxygenation of isopentenylaldehyde. Both the FCK3 and FCK4 enzymes act downstream of the identified cytokinins to produce yet unidentified compounds. The protein is Probable glycosyltransferase FCK3 of Fusarium pseudograminearum (strain CS3096) (Wheat and barley crown-rot fungus).